The primary structure comprises 99 residues: uncharacterized protein (99 aa).

This sequence belongs to the HesB/IscA family.

This is an uncharacterized protein from Staphylococcus haemolyticus (strain JCSC1435).